The primary structure comprises 372 residues: Glutamate 5-kinase (372 aa).

Lys14 serves as a coordination point for ATP. The substrate site is built by Ser54, Asp141, and Asn153. 173 to 174 (TD) serves as a coordination point for ATP. In terms of domain architecture, PUA spans 280-358 (RGTLVLDAGA…EAIESILGYS (79 aa)).

Belongs to the glutamate 5-kinase family.

It is found in the cytoplasm. It catalyses the reaction L-glutamate + ATP = L-glutamyl 5-phosphate + ADP. Its pathway is amino-acid biosynthesis; L-proline biosynthesis; L-glutamate 5-semialdehyde from L-glutamate: step 1/2. Catalyzes the transfer of a phosphate group to glutamate to form L-glutamate 5-phosphate. The sequence is that of Glutamate 5-kinase from Pseudomonas putida (strain ATCC 700007 / DSM 6899 / JCM 31910 / BCRC 17059 / LMG 24140 / F1).